The sequence spans 427 residues: Serine--tRNA ligase (427 aa).

230–232 (TSE) lines the L-serine pocket. ATP is bound by residues 260–262 (RRE) and V276. E283 contacts L-serine. 347 to 350 (ELTS) is an ATP binding site. T387 provides a ligand contact to L-serine.

Belongs to the class-II aminoacyl-tRNA synthetase family. Type-1 seryl-tRNA synthetase subfamily. In terms of assembly, homodimer. The tRNA molecule binds across the dimer.

It localises to the cytoplasm. The enzyme catalyses tRNA(Ser) + L-serine + ATP = L-seryl-tRNA(Ser) + AMP + diphosphate + H(+). The catalysed reaction is tRNA(Sec) + L-serine + ATP = L-seryl-tRNA(Sec) + AMP + diphosphate + H(+). Its pathway is aminoacyl-tRNA biosynthesis; selenocysteinyl-tRNA(Sec) biosynthesis; L-seryl-tRNA(Sec) from L-serine and tRNA(Sec): step 1/1. Its function is as follows. Catalyzes the attachment of serine to tRNA(Ser). Is also able to aminoacylate tRNA(Sec) with serine, to form the misacylated tRNA L-seryl-tRNA(Sec), which will be further converted into selenocysteinyl-tRNA(Sec). The polypeptide is Serine--tRNA ligase (Micrococcus luteus (strain ATCC 4698 / DSM 20030 / JCM 1464 / CCM 169 / CCUG 5858 / IAM 1056 / NBRC 3333 / NCIMB 9278 / NCTC 2665 / VKM Ac-2230) (Micrococcus lysodeikticus)).